Reading from the N-terminus, the 201-residue chain is Large ribosomal subunit protein uL4 (201 aa).

The disordered stretch occupies residues 44 to 71 (RAQKTRAEVTGSGKKPWRQKGTGRARSG).

This sequence belongs to the universal ribosomal protein uL4 family. In terms of assembly, part of the 50S ribosomal subunit.

Its function is as follows. One of the primary rRNA binding proteins, this protein initially binds near the 5'-end of the 23S rRNA. It is important during the early stages of 50S assembly. It makes multiple contacts with different domains of the 23S rRNA in the assembled 50S subunit and ribosome. In terms of biological role, forms part of the polypeptide exit tunnel. The sequence is that of Large ribosomal subunit protein uL4 from Enterobacter sp. (strain 638).